The sequence spans 275 residues: Pyridoxal phosphate homeostasis protein (275 aa).

Ser6 carries the post-translational modification Phosphoserine. Lys47 carries the N6-(pyridoxal phosphate)lysine modification. A Phosphotyrosine modification is found at Tyr69. Lys125 carries the post-translational modification N6-succinyllysine. 2 positions are modified to phosphoserine: Ser226 and Ser244. Basic and acidic residues predominate over residues Asp251–Ala263. Positions Asp251–His275 are disordered.

This sequence belongs to the pyridoxal phosphate-binding protein YggS/PROSC family. As to expression, ubiquitous.

Functionally, pyridoxal 5'-phosphate (PLP)-binding protein, which may be involved in intracellular homeostatic regulation of pyridoxal 5'-phosphate (PLP), the active form of vitamin B6. The polypeptide is Pyridoxal phosphate homeostasis protein (Homo sapiens (Human)).